Here is a 317-residue protein sequence, read N- to C-terminus: Melanocyte-stimulating hormone receptor (317 aa).

Residues 1-37 lie on the Extracellular side of the membrane; that stretch reads MPMQEPQRRLLGPFNSTRTGAPHLELSANQTGPWCLH. 2 N-linked (GlcNAc...) asparagine glycosylation sites follow: Asn15 and Asn29. A helical membrane pass occupies residues 38–63; the sequence is VSIPDGLFLSLGLVSLVENVLVVISI. Over 64–72 the chain is Cytoplasmic; that stretch reads AKNQNLHSP. A helical transmembrane segment spans residues 73 to 93; the sequence is MYYFICCLALSDLLVSVSIVL. Over 94 to 118 the chain is Extracellular; that stretch reads ETTLILVLEAGALATRVTVVQQLDN. The chain crosses the membrane as a helical span at residues 119-140; the sequence is VIDVLICASMVSSLCFLGAIAV. The Cytoplasmic portion of the chain corresponds to 141–163; it reads DRYISIFYALRYHSIVTLPRARW. The helical transmembrane segment at 164 to 183 threads the bilayer; the sequence is AIVAIWVASISSSTLFVAYY. Residues 184–191 are Extracellular-facing; it reads NHTAVLLC. The chain crosses the membrane as a helical span at residues 192–211; that stretch reads LVTFFLATLALMVVLYVHML. The Cytoplasmic segment spans residues 212 to 240; sequence ARAHQHAQAIAQLHKRQHLVHQGFRLKGA. The helical transmembrane segment at 241–266 threads the bilayer; sequence ATLTILLGIFFLCWGPFFLYLTLIVL. At 267-279 the chain is on the extracellular side; it reads CPKHPTCGCFFKN. A helical transmembrane segment spans residues 280–300; that stretch reads LNLFLALIIFNSIVDPLIYAF. The Cytoplasmic portion of the chain corresponds to 301–317; the sequence is RSQELRMTLKEVLLCSW. Cys315 is lipidated: S-palmitoyl cysteine.

It belongs to the G-protein coupled receptor 1 family. Interacts with MGRN1, but does not undergo MGRN1-mediated ubiquitination; this interaction competes with GNAS-binding and thus inhibits agonist-induced cAMP production. Interacts with OPN3; the interaction results in a decrease in MC1R-mediated cAMP signaling and ultimately a decrease in melanin production in melanocytes.

The protein resides in the cell membrane. In terms of biological role, receptor for MSH (alpha, beta and gamma) and ACTH. The activity of this receptor is mediated by G proteins which activate adenylate cyclase. Mediates melanogenesis, the production of eumelanin (black/brown) and phaeomelanin (red/yellow), via regulation of cAMP signaling in melanocytes. The protein is Melanocyte-stimulating hormone receptor (MC1R) of Chaetodipus penicillatus (Desert pocket mouse).